A 157-amino-acid chain; its full sequence is Transcriptional repressor NrdR (157 aa).

The tract at residues 1-22 is disordered; the sequence is MRCPKCGATKSSVIDSRQAEEG. Residues 3-34 fold into a zinc finger; it reads CPKCGATKSSVIDSRQAEEGNTIRRRRECDEC. An ATP-cone domain is found at 49-139; the sequence is LVVVKKDGTR…VYRSFKDVSE (91 aa).

This sequence belongs to the NrdR family. Requires Zn(2+) as cofactor.

Functionally, negatively regulates transcription of bacterial ribonucleotide reductase nrd genes and operons by binding to NrdR-boxes. The sequence is that of Transcriptional repressor NrdR from Streptococcus pneumoniae (strain Hungary19A-6).